Reading from the N-terminus, the 181-residue chain is NADH-quinone oxidoreductase subunit B 2 (181 aa).

Residues C44, C45, C110, and C139 each contribute to the [4Fe-4S] cluster site.

It belongs to the complex I 20 kDa subunit family. In terms of assembly, NDH-1 is composed of 14 different subunits. Subunits NuoB, C, D, E, F, and G constitute the peripheral sector of the complex. [4Fe-4S] cluster is required as a cofactor.

It is found in the cell inner membrane. It catalyses the reaction a quinone + NADH + 5 H(+)(in) = a quinol + NAD(+) + 4 H(+)(out). Its function is as follows. NDH-1 shuttles electrons from NADH, via FMN and iron-sulfur (Fe-S) centers, to quinones in the respiratory chain. The immediate electron acceptor for the enzyme in this species is believed to be a menaquinone. Couples the redox reaction to proton translocation (for every two electrons transferred, four hydrogen ions are translocated across the cytoplasmic membrane), and thus conserves the redox energy in a proton gradient. The protein is NADH-quinone oxidoreductase subunit B 2 of Cytophaga hutchinsonii (strain ATCC 33406 / DSM 1761 / CIP 103989 / NBRC 15051 / NCIMB 9469 / D465).